We begin with the raw amino-acid sequence, 607 residues long: MRSLWIVLVLVLGSALLLQVMAASDDRIPYARFRSLAERGELAEIEIRDDMYIGRAVSGLSARAPQSYRTGRIEQTEKDLLADLDRRGIPYTRVADELGLPPYLWLLLPLAGLAAMGHLASRRATTAGTISGAATAFGKHKARLYEERGAIATFRDVAGNAEAKTELSEIVDFLKAPERYEKLGGRMPRGVLLVGPPGTGKTLLARAIAGEASVPFFSASGSEFVEMFVGVGAARVRDLFSQAREKGACLVFIDELDAVGKVRGLGGSVGGHDEREQTLNQLLTEMDGFDAHTAMVVIGATNRAEILDPALLRPGRFDRRVHIDRPDLAERKEILAVHARKVALDPGADLDAVAAQTAGLVGADLANIVNEAALLAARRGAEAVGHGDLEAAIERGLAGLERRGRRLGAREKLVVAYHEVGHALTASLLPTQDPVRKVSIVPRGPGALGYTIQQPREDRYLWSRQEILDRLVVLLGGRVAEEEAVGDLSTGAQDDLLNATELARRMVRELGMGQGLGLSALEPRRPLSFLGEAQGAMPSGAGPRECSDATARAIDAEVARILADAEARARALIQGHRPTLERVAARLYEVETLSGDELREMVASGEA.

Residues 1–2 (MR) are Cytoplasmic-facing. A helical membrane pass occupies residues 3–23 (SLWIVLVLVLGSALLLQVMAA). At 24 to 99 (SDDRIPYARF…PYTRVADELG (76 aa)) the chain is on the periplasmic side. The helical transmembrane segment at 100–120 (LPPYLWLLLPLAGLAAMGHLA) threads the bilayer. The Cytoplasmic segment spans residues 121–607 (SRRATTAGTI…LREMVASGEA (487 aa)). 195 to 202 (GPPGTGKT) provides a ligand contact to ATP. Residue His418 participates in Zn(2+) binding. The active site involves Glu419. Residues His422 and Asp495 each contribute to the Zn(2+) site.

In the central section; belongs to the AAA ATPase family. This sequence in the C-terminal section; belongs to the peptidase M41 family. In terms of assembly, homohexamer. Requires Zn(2+) as cofactor.

Its subcellular location is the cell inner membrane. Its function is as follows. Acts as a processive, ATP-dependent zinc metallopeptidase for both cytoplasmic and membrane proteins. Plays a role in the quality control of integral membrane proteins. This Sorangium cellulosum (strain So ce56) (Polyangium cellulosum (strain So ce56)) protein is ATP-dependent zinc metalloprotease FtsH 2.